A 487-amino-acid chain; its full sequence is Glutamyl-tRNA(Gln) amidotransferase subunit A (487 aa).

Residues lysine 80 and serine 155 each act as charge relay system in the active site. Catalysis depends on serine 179, which acts as the Acyl-ester intermediate.

This sequence belongs to the amidase family. GatA subfamily. As to quaternary structure, heterotrimer of A, B and C subunits.

It carries out the reaction L-glutamyl-tRNA(Gln) + L-glutamine + ATP + H2O = L-glutaminyl-tRNA(Gln) + L-glutamate + ADP + phosphate + H(+). Functionally, allows the formation of correctly charged Gln-tRNA(Gln) through the transamidation of misacylated Glu-tRNA(Gln) in organisms which lack glutaminyl-tRNA synthetase. The reaction takes place in the presence of glutamine and ATP through an activated gamma-phospho-Glu-tRNA(Gln). In Leptospira interrogans serogroup Icterohaemorrhagiae serovar Lai (strain 56601), this protein is Glutamyl-tRNA(Gln) amidotransferase subunit A.